Reading from the N-terminus, the 512-residue chain is ATP synthase subunit alpha (512 aa).

An ATP-binding site is contributed by 169–176; it reads GDRQTGKT.

It belongs to the ATPase alpha/beta chains family. As to quaternary structure, F-type ATPases have 2 components, CF(1) - the catalytic core - and CF(0) - the membrane proton channel. CF(1) has five subunits: alpha(3), beta(3), gamma(1), delta(1), epsilon(1). CF(0) has three main subunits: a(1), b(2) and c(9-12). The alpha and beta chains form an alternating ring which encloses part of the gamma chain. CF(1) is attached to CF(0) by a central stalk formed by the gamma and epsilon chains, while a peripheral stalk is formed by the delta and b chains.

It localises to the cell inner membrane. The enzyme catalyses ATP + H2O + 4 H(+)(in) = ADP + phosphate + 5 H(+)(out). Its function is as follows. Produces ATP from ADP in the presence of a proton gradient across the membrane. The alpha chain is a regulatory subunit. This is ATP synthase subunit alpha from Rickettsia bellii (strain OSU 85-389).